The following is a 1192-amino-acid chain: Probable ATP-binding protein BrxC (1192 aa).

It belongs to the BrxC family.

In terms of biological role, BREX systems (bacteriophage exclusion) provide immunity against bacteriophage. A core protein of a type 1 BREX system. This system allows phage adsorption but prevents phage DNA replication, without degradation of the phage DNA. Methylation of bacterial DNA by PglX probably guides self/non-self discrimination. When the brxA-brxB-brxC-pglX and pglZ-brxL operons are transformed into a susceptible B.subtilis strain (BEST7003) they confer resistance to bacteriophages SPbeta, SP16, Zeta, phi3T and SP02 and partial protection to phages SP01 and SP82G (these include lytic and temperate phage). They do not protect against phages phi105, rho10 or rho14. Additionally confers a very slight reduction in efficiency of plasmid transformation. This is Probable ATP-binding protein BrxC from Bacillus cereus (strain H3081.97).